The following is a 226-amino-acid chain: Deoxyribose-phosphate aldolase (226 aa).

Catalysis depends on D93, which acts as the Proton donor/acceptor. The active-site Schiff-base intermediate with acetaldehyde is K159. The active-site Proton donor/acceptor is the K189.

This sequence belongs to the DeoC/FbaB aldolase family. DeoC type 1 subfamily.

It is found in the cytoplasm. It carries out the reaction 2-deoxy-D-ribose 5-phosphate = D-glyceraldehyde 3-phosphate + acetaldehyde. It participates in carbohydrate degradation; 2-deoxy-D-ribose 1-phosphate degradation; D-glyceraldehyde 3-phosphate and acetaldehyde from 2-deoxy-alpha-D-ribose 1-phosphate: step 2/2. In terms of biological role, catalyzes a reversible aldol reaction between acetaldehyde and D-glyceraldehyde 3-phosphate to generate 2-deoxy-D-ribose 5-phosphate. This is Deoxyribose-phosphate aldolase from Mycobacterium marinum (strain ATCC BAA-535 / M).